A 72-amino-acid polypeptide reads, in one-letter code: GFYFRSIQGFYFKRIQGNICSEPKKVGRCRGSFPRFYFDSETGKCTPFIYGGCGGNGNNFETLRRCRAICRA.

The signal sequence occupies residues 1 to 14 (GFYFRSIQGFYFKR). Positions 20–70 (CSEPKKVGRCRGSFPRFYFDSETGKCTPFIYGGCGGNGNNFETLRRCRAIC) constitute a BPTI/Kunitz inhibitor domain. Intrachain disulfides connect Cys20–Cys70, Cys29–Cys53, and Cys45–Cys66.

Belongs to the venom Kunitz-type family. Sea anemone type 2 potassium channel toxin subfamily.

It is found in the secreted. The protein resides in the nematocyst. Functionally, serine protease inhibitor that inhibits trypsin (Ki=50 nM). This protease exhibits a pronounced neuroprotective activity on Alzheimer's disease model. It enhances cell viability by 39.4% when neuroblastoma cells are in presence of the toxin component beta-amyloid, but has no effect when these cells are in presence of 6-OHDA. It induces an effective decrease of reactive oxygen species (ROS) level in the cells treated with oxidative stress inducers. It also protects these cells by inhibiting ATP-induced purinoceptor activation. Its binding affinity to P2RX7 is moderate (Kd=43.3 uM). This is PI-stichotoxin-Hmg3d from Heteractis magnifica (Magnificent sea anemone).